Consider the following 234-residue polypeptide: t-SNARE protein aex-4 (234 aa).

2 consecutive t-SNARE coiled-coil homology domains span residues 37 to 99 (AKLN…ITAM) and 170 to 232 (DAIE…VKKL).

The protein belongs to the SNAP-25 family. In terms of tissue distribution, expressed in intestinal cells.

The protein resides in the cell membrane. In terms of biological role, t-SNARE protein which regulates the secretion of aex-5 from intestinal cells. Involved in the defecation motor program, which is a coordinated series of three muscle contractions that occurs every 45 seconds. The protein is t-SNARE protein aex-4 of Caenorhabditis elegans.